Here is a 207-residue protein sequence, read N- to C-terminus: BTB/POZ domain-containing protein At1g01640 (207 aa).

In terms of domain architecture, BTB spans 24 to 94 (TDVLVKPGEE…LYSGNLKAPY (71 aa)).

In terms of assembly, interacts with CUL3A.

It participates in protein modification; protein ubiquitination. Its function is as follows. May act as a substrate-specific adapter of an E3 ubiquitin-protein ligase complex (CUL3-RBX1-BTB) which mediates the ubiquitination and subsequent proteasomal degradation of target proteins. The sequence is that of BTB/POZ domain-containing protein At1g01640 from Arabidopsis thaliana (Mouse-ear cress).